The following is a 93-amino-acid chain: Neurophysin 1 (93 aa).

Disulfide bonds link cysteine 10–cysteine 54, cysteine 13–cysteine 27, cysteine 21–cysteine 44, cysteine 28–cysteine 34, cysteine 61–cysteine 74, cysteine 68–cysteine 86, and cysteine 75–cysteine 80.

Belongs to the vasopressin/oxytocin family.

In terms of biological role, neurophysin 1 specifically binds oxytocin. The chain is Neurophysin 1 from Struthio camelus (Common ostrich).